The following is an 89-amino-acid chain: Small ribosomal subunit protein uS15 (89 aa).

It belongs to the universal ribosomal protein uS15 family. In terms of assembly, part of the 30S ribosomal subunit. Forms a bridge to the 50S subunit in the 70S ribosome, contacting the 23S rRNA.

Its function is as follows. One of the primary rRNA binding proteins, it binds directly to 16S rRNA where it helps nucleate assembly of the platform of the 30S subunit by binding and bridging several RNA helices of the 16S rRNA. Forms an intersubunit bridge (bridge B4) with the 23S rRNA of the 50S subunit in the ribosome. The chain is Small ribosomal subunit protein uS15 from Mesorhizobium japonicum (strain LMG 29417 / CECT 9101 / MAFF 303099) (Mesorhizobium loti (strain MAFF 303099)).